The chain runs to 139 residues: Thioredoxin 2 (139 aa).

A zinc finger lies at 5 to 18 (CTHCQAINRIPDDR). Positions 26-139 (GRCGHDLFDG…PFDSWLNESL (114 aa)) constitute a Thioredoxin domain. A disulfide bridge connects residues cysteine 64 and cysteine 67.

The protein belongs to the thioredoxin family.

It is found in the cytoplasm. It catalyses the reaction [protein]-dithiol + NAD(+) = [protein]-disulfide + NADH + H(+). The enzyme catalyses [protein]-dithiol + NADP(+) = [protein]-disulfide + NADPH + H(+). Efficient electron donor for the essential enzyme ribonucleotide reductase. Is also able to reduce the interchain disulfide bridges of insulin. The protein is Thioredoxin 2 (trxC) of Escherichia coli O6:H1 (strain CFT073 / ATCC 700928 / UPEC).